A 98-amino-acid polypeptide reads, in one-letter code: NADH-ubiquinone oxidoreductase chain 4L (98 aa).

3 helical membrane-spanning segments follow: residues 1–21 (MSLT…GLLM), 29–49 (SLLC…VTIL), and 61–81 (IILL…LVMV).

Belongs to the complex I subunit 4L family. In terms of assembly, core subunit of respiratory chain NADH dehydrogenase (Complex I) which is composed of 45 different subunits.

Its subcellular location is the mitochondrion inner membrane. The catalysed reaction is a ubiquinone + NADH + 5 H(+)(in) = a ubiquinol + NAD(+) + 4 H(+)(out). Its function is as follows. Core subunit of the mitochondrial membrane respiratory chain NADH dehydrogenase (Complex I) which catalyzes electron transfer from NADH through the respiratory chain, using ubiquinone as an electron acceptor. Part of the enzyme membrane arm which is embedded in the lipid bilayer and involved in proton translocation. The protein is NADH-ubiquinone oxidoreductase chain 4L (MT-ND4L) of Sturnira lilium (Lesser yellow-shouldered bat).